The chain runs to 475 residues: MVPQTETKAGAGFKAGVKDYRLTYYTPDYMVKDTDILAAFRMTPQPGVPPEECGAAVAAESSTGTWTTVWTDGLTSLDRYKGRCYDIEPVAGEDNQYIAYVAYPIDLFEEGSVTNLFTSIVGNVFGFKALRALRLEDLRIPPAYAKTFQGPPHGIQVERDKINKYGRGLLGCTIKPKLGLSAKNYGRAVYECLRGGLDFTKDDENVNSQPFMRWRDRFTFVAEAIYKSQAETGEIKGHYLNVTAATSEEMMKRAECAKDLGVPIIMHDYLTAGLTANTSLAHYCRDTGLLLHIHRAMHAVIDRQRNHGIHFRVLAKALRLSGGDHLHSGTVVGKLEGEREVTLGFVDLMRDDYIEKDRSRGIYFTQDWCSLPGVMPVASGGIHVWHMPALVEIFGDDACLQFGGGTLGHPWGNAPGAAANRVALEACTQARNAGVDLARKGGDVIRAACKWSPELAAACEVWKEIKFEFETIDKL.

A propeptide spanning residues 1–2 is cleaved from the precursor; sequence MV. Pro3 bears the N-acetylproline mark. N6,N6,N6-trimethyllysine is present on Lys14. Substrate-binding residues include Asn123 and Thr173. The active-site Proton acceptor is Lys175. Lys177 serves as a coordination point for substrate. Mg(2+) contacts are provided by Lys201, Asp203, and Glu204. Lys201 carries the post-translational modification N6-carboxylysine. Residue His294 is the Proton acceptor of the active site. The substrate site is built by Arg295, His327, and Ser379.

The protein belongs to the RuBisCO large chain family. Type I subfamily. In terms of assembly, heterohexadecamer of 8 large chains and 8 small chains. Mg(2+) is required as a cofactor.

The protein localises to the plastid. It is found in the chloroplast. It catalyses the reaction 2 (2R)-3-phosphoglycerate + 2 H(+) = D-ribulose 1,5-bisphosphate + CO2 + H2O. The enzyme catalyses D-ribulose 1,5-bisphosphate + O2 = 2-phosphoglycolate + (2R)-3-phosphoglycerate + 2 H(+). RuBisCO catalyzes two reactions: the carboxylation of D-ribulose 1,5-bisphosphate, the primary event in carbon dioxide fixation, as well as the oxidative fragmentation of the pentose substrate in the photorespiration process. Both reactions occur simultaneously and in competition at the same active site. The protein is Ribulose bisphosphate carboxylase large chain of Stigeoclonium helveticum (Green alga).